The chain runs to 105 residues: ATP-dependent Clp protease adapter protein ClpS (105 aa).

This sequence belongs to the ClpS family. Binds to the N-terminal domain of the chaperone ClpA.

Involved in the modulation of the specificity of the ClpAP-mediated ATP-dependent protein degradation. The sequence is that of ATP-dependent Clp protease adapter protein ClpS from Aeromonas hydrophila subsp. hydrophila (strain ATCC 7966 / DSM 30187 / BCRC 13018 / CCUG 14551 / JCM 1027 / KCTC 2358 / NCIMB 9240 / NCTC 8049).